A 290-amino-acid polypeptide reads, in one-letter code: Protein-glutamine deamidase Cif (290 aa).

The interval 1-26 (MKISPNTISPSQSDPRMSTNVSQRSR) is disordered. Active-site residues include C117, H173, and Q193.

It belongs to the Cif family.

It localises to the secreted. The protein resides in the host nucleus. The catalysed reaction is L-glutaminyl-[protein] + H2O = L-glutamyl-[protein] + NH4(+). Its function is as follows. Protein-glutamine deamidase effector that inhibits the host cell cycle and other key cellular processes such as the actin network and programmed-cell death. Acts by mediating the side chain deamidation of 'Gln-40' of host NEDD8, converting it to glutamate, thereby abolishing the activity of cullin-RING-based E3 ubiquitin-protein ligase complexes (CRL complexes). Inactivation of CRL complexes prevents ubiquitination and subsequent degradation of the cyclin-dependent kinase inhibitors CDKN1A/p21 and CDKN1B/p27, leading to G1 and G2 cell cycle arrests in host cells. Also able to catalyze deamidation of 'Gln-40' of host ubiquitin in vitro; however, NEDD8 constitutes the preferred substrate in vivo. The sequence is that of Protein-glutamine deamidase Cif from Yersinia pseudotuberculosis serotype O:3 (strain YPIII).